The sequence spans 113 residues: uncharacterized protein (113 aa).

Residues Met-1 to Ala-20 form the signal peptide.

This is an uncharacterized protein from Escherichia coli (strain K12).